A 161-amino-acid chain; its full sequence is Large ribosomal subunit protein uL15 (161 aa).

Residues 1–43 are disordered; it reads MKLSDIADNAGARKKRMRVGRGIGSGKGKTSGRGGKGQTARSG. The segment covering 21–37 has biased composition (gly residues); it reads RGIGSGKGKTSGRGGKG.

Belongs to the universal ribosomal protein uL15 family. In terms of assembly, part of the 50S ribosomal subunit.

Its function is as follows. Binds to the 23S rRNA. The polypeptide is Large ribosomal subunit protein uL15 (Bradyrhizobium sp. (strain ORS 278)).